Here is a 177-residue protein sequence, read N- to C-terminus: Large ribosomal subunit protein uL6 (177 aa).

The disordered stretch occupies residues 151–177 (LRPPEPYKGKGVRYAGENVRRKEGKKK).

The protein belongs to the universal ribosomal protein uL6 family. In terms of assembly, part of the 50S ribosomal subunit.

This protein binds to the 23S rRNA, and is important in its secondary structure. It is located near the subunit interface in the base of the L7/L12 stalk, and near the tRNA binding site of the peptidyltransferase center. The polypeptide is Large ribosomal subunit protein uL6 (Phenylobacterium zucineum (strain HLK1)).